The chain runs to 647 residues: DNA mismatch repair protein MutL (647 aa).

This sequence belongs to the DNA mismatch repair MutL/HexB family.

In terms of biological role, this protein is involved in the repair of mismatches in DNA. It is required for dam-dependent methyl-directed DNA mismatch repair. May act as a 'molecular matchmaker', a protein that promotes the formation of a stable complex between two or more DNA-binding proteins in an ATP-dependent manner without itself being part of a final effector complex. The chain is DNA mismatch repair protein MutL from Koribacter versatilis (strain Ellin345).